The primary structure comprises 550 residues: Chaperonin GroEL (550 aa).

ATP contacts are provided by residues 30 to 33 (TLGP), Lys-51, 87 to 91 (DGTTT), Gly-415, and Asp-496.

This sequence belongs to the chaperonin (HSP60) family. In terms of assembly, forms a cylinder of 14 subunits composed of two heptameric rings stacked back-to-back. Interacts with the co-chaperonin GroES.

The protein localises to the cytoplasm. The enzyme catalyses ATP + H2O + a folded polypeptide = ADP + phosphate + an unfolded polypeptide.. Functionally, together with its co-chaperonin GroES, plays an essential role in assisting protein folding. The GroEL-GroES system forms a nano-cage that allows encapsulation of the non-native substrate proteins and provides a physical environment optimized to promote and accelerate protein folding. The chain is Chaperonin GroEL from Rickettsia bellii (strain OSU 85-389).